We begin with the raw amino-acid sequence, 393 residues long: Formate-dependent phosphoribosylglycinamide formyltransferase (393 aa).

Residues 22 to 23 (EL) and E82 each bind N(1)-(5-phospho-beta-D-ribosyl)glycinamide. ATP contacts are provided by residues R114, K155, 160 to 165 (SSGKGQ), 195 to 198 (EGLV), and E203. An ATP-grasp domain is found at 119–308 (RLAAETLQLP…EFALHVRAFL (190 aa)). E267 and E279 together coordinate Mg(2+). N(1)-(5-phospho-beta-D-ribosyl)glycinamide contacts are provided by residues D286, K355, and 362–363 (RR).

Belongs to the PurK/PurT family. Homodimer.

The catalysed reaction is N(1)-(5-phospho-beta-D-ribosyl)glycinamide + formate + ATP = N(2)-formyl-N(1)-(5-phospho-beta-D-ribosyl)glycinamide + ADP + phosphate + H(+). Its pathway is purine metabolism; IMP biosynthesis via de novo pathway; N(2)-formyl-N(1)-(5-phospho-D-ribosyl)glycinamide from N(1)-(5-phospho-D-ribosyl)glycinamide (formate route): step 1/1. Involved in the de novo purine biosynthesis. Catalyzes the transfer of formate to 5-phospho-ribosyl-glycinamide (GAR), producing 5-phospho-ribosyl-N-formylglycinamide (FGAR). Formate is provided by PurU via hydrolysis of 10-formyl-tetrahydrofolate. The chain is Formate-dependent phosphoribosylglycinamide formyltransferase from Yersinia pseudotuberculosis serotype O:3 (strain YPIII).